We begin with the raw amino-acid sequence, 107 residues long: Protein Rev (107 aa).

Phosphoserine; by host CK2 is present on residues Ser5 and Ser8. Positions 18–26 are homomultimerization; the sequence is IIKILYQSN. Disordered regions lie at residues 26 to 48 and 81 to 107; these read NPYPTPEGTRQARRNRRRRWRAR and LNLDCSEDSGTSGTQQSQGTTEGVGNP. The Nuclear localization signal and RNA-binding (RRE) motif lies at 34–50; it reads TRQARRNRRRRWRARQR. A compositionally biased stretch (basic residues) spans 36 to 48; the sequence is QARRNRRRRWRAR. The short motif at 73-84 is the Nuclear export signal and binding to XPO1 element; the sequence is LQLPPLERLNLD. The segment covering 89-101 has biased composition (low complexity); the sequence is SGTSGTQQSQGTT. Ser92 is subject to Phosphoserine; by host.

This sequence belongs to the HIV-1 REV protein family. As to quaternary structure, homomultimer; when bound to the RRE. Multimeric assembly is essential for activity and may involve XPO1. Binds to human KPNB1, XPO1, TNPO1, RANBP5 and IPO7. Interacts with the viral Integrase. Interacts with human KHDRBS1. Interacts with human NAP1; this interaction decreases Rev multimerization and stimulates its activity. Interacts with human DEAD-box helicases DDX3 and DDX24; these interactions may serve for viral RNA export to the cytoplasm and packaging, respectively. Interacts with human PSIP1; this interaction may inhibit HIV-1 DNA integration by promoting dissociation of the Integrase-LEDGF/p75 complex. Post-translationally, asymmetrically arginine dimethylated at one site by host PRMT6. Methylation impairs the RNA-binding activity and export of viral RNA from the nucleus to the cytoplasm. In terms of processing, phosphorylated by protein kinase CK2. Presence of, and maybe binding to the N-terminus of the regulatory beta subunit of CK2 is necessary for CK2-mediated Rev's phosphorylation.

It localises to the host nucleus. Its subcellular location is the host nucleolus. It is found in the host cytoplasm. In terms of biological role, escorts unspliced or incompletely spliced viral pre-mRNAs (late transcripts) out of the nucleus of infected cells. These pre-mRNAs carry a recognition sequence called Rev responsive element (RRE) located in the env gene, that is not present in fully spliced viral mRNAs (early transcripts). This function is essential since most viral proteins are translated from unspliced or partially spliced pre-mRNAs which cannot exit the nucleus by the pathway used by fully processed cellular mRNAs. Rev itself is translated from a fully spliced mRNA that readily exits the nucleus. Rev's nuclear localization signal (NLS) binds directly to KPNB1/Importin beta-1 without previous binding to KPNA1/Importin alpha-1. KPNB1 binds to the GDP bound form of RAN (Ran-GDP) and targets Rev to the nucleus. In the nucleus, the conversion from Ran-GDP to Ran-GTP dissociates Rev from KPNB1 and allows Rev's binding to the RRE in viral pre-mRNAs. Rev multimerization on the RRE via cooperative assembly exposes its nuclear export signal (NES) to the surface. Rev can then form a complex with XPO1/CRM1 and Ran-GTP, leading to nuclear export of the complex. Conversion from Ran-GTP to Ran-GDP mediates dissociation of the Rev/RRE/XPO1/RAN complex, so that Rev can return to the nucleus for a subsequent round of export. Beside KPNB1, also seems to interact with TNPO1/Transportin-1, RANBP5/IPO5 and IPO7/RANBP7 for nuclear import. The nucleoporin-like HRB/RIP is an essential cofactor that probably indirectly interacts with Rev to release HIV RNAs from the perinuclear region to the cytoplasm. In Homo sapiens (Human), this protein is Protein Rev.